A 354-amino-acid chain; its full sequence is Guanine nucleotide-binding protein G(i) subunit alpha-1 (354 aa).

The N-myristoyl glycine moiety is linked to residue G2. A lipid anchor (S-palmitoyl cysteine) is attached at C3. A G-alpha domain is found at 32–354 (REVKLLLLGA…KNNLKDCGLF (323 aa)). Positions 35–48 (KLLLLGAGESGKST) are G1 motif. Residues 43 to 48 (ESGKST), 150 to 151 (DS), and 175 to 178 (LRTR) contribute to the GTP site. Position 47 (S47) interacts with Mg(2+). The G2 motif stretch occupies residues 173 to 181 (DVLRTRVKT). T181 contacts Mg(2+). The segment at 196 to 205 (FKMFDVGGQR) is G3 motif. GTP-binding positions include 200–204 (DVGGQ), 269–272 (NKKD), and A326. The interval 265–272 (ILFLNKKD) is G4 motif. The segment at 324-329 (TCATDT) is G5 motif.

Belongs to the G-alpha family. G(i/o/t/z) subfamily. In terms of assembly, heterotrimeric G proteins are composed of 3 units; alpha, beta and gamma. The alpha chain contains the guanine nucleotide binding site. Part of a spindle orientation complex at least composed of GNAI1, GPSM2 and NUMA1. Identified in complex with the beta subunit GNB1 and the gamma subunit GNG1. Identified in complex with the beta subunit GNB1 and the gamma subunit GNG2. Component of the TAS2R14-GNAI1 complex, consisting of TAS2R14, GNAI1, GNB1 and GNG2; within the complex interacts with TAS2R14; this complex plays a role in the perception of bitterness. GTP binding causes dissociation of the heterotrimer, liberating the individual subunits so that they can interact with downstream effector proteins. Interacts (GDP-bound form) with GPSM1; this inhibits guanine nucleotide exchange and GTP binding. Interacts (GDP-bound form) with GPSM2 (via GoLoco domains); this inhibits guanine nucleotide exchange. Interacts with RGS10; this strongly enhances GTP hydrolysis. Interacts with RGS1 and RGS16; this strongly enhances GTPase activity. Interacts with RGS4. Interacts with RGS12. Interacts (via active GTP- or inactive GDP-bound forms) with RGS14 (via RGS and GoLoco domains). Interacts with RGS3, RGS6, RGS7, RGS8, RGS17, RGS18 and RGS20 (in vitro). Interacts (GDP-bound form) with RIC8A (via C-terminus); promoting GNAI1 folding and association with the plasma membrane. Interacts (inactive GDP-bound form) with NUCB1 (via GBA motif); the interaction leads to activation of GNAI1. Interacts (inactive GDP-bound form) with CCDC88C/DAPLE (via GBA motif); the interaction leads to activation of GNAI1. Interacts (inactive GDP-bound form) with CCDC8A/GIV (via GBA motif). Myristoylation at Gly-2 is required for membrane anchoring before palmitoylation. In terms of processing, palmitoylation at Cys-3 varies with membrane lipid composition. As to expression, mainly expressed in the brain, lung and kidney.

The protein localises to the nucleus. It localises to the cytoplasm. Its subcellular location is the cell membrane. The protein resides in the cytoskeleton. It is found in the microtubule organizing center. The protein localises to the centrosome. It localises to the cell cortex. Its subcellular location is the membrane. It carries out the reaction GTP + H2O = GDP + phosphate + H(+). Functionally, guanine nucleotide-binding proteins (G proteins) function as transducers downstream of G protein-coupled receptors (GPCRs) in numerous signaling cascades. The alpha chain contains the guanine nucleotide binding site and alternates between an active, GTP-bound state and an inactive, GDP-bound state. Signaling by an activated GPCR promotes GDP release and GTP binding. The alpha subunit has a low GTPase activity that converts bound GTP to GDP, thereby terminating the signal. Both GDP release and GTP hydrolysis are modulated by numerous regulatory proteins. Signaling is mediated via effector proteins, such as adenylate cyclase. Inhibits adenylate cyclase activity of ADCY1, ADCY5 and ADCY6, leading to decreased intracellular cAMP levels. The inactive GDP-bound form prevents the association of RGS14 with centrosomes and is required for the translocation of RGS14 from the cytoplasm to the plasma membrane. Required for normal cytokinesis during mitosis. Required for cortical dynein-dynactin complex recruitment during metaphase. The chain is Guanine nucleotide-binding protein G(i) subunit alpha-1 (GNAI1) from Cavia porcellus (Guinea pig).